The following is a 283-amino-acid chain: 5'-nucleotidase SurE (283 aa).

Positions 14, 15, 47, and 105 each coordinate a divalent metal cation.

This sequence belongs to the SurE nucleotidase family. A divalent metal cation serves as cofactor.

It is found in the cytoplasm. The enzyme catalyses a ribonucleoside 5'-phosphate + H2O = a ribonucleoside + phosphate. Its function is as follows. Nucleotidase that shows phosphatase activity on nucleoside 5'-monophosphates. In Chlamydia muridarum (strain MoPn / Nigg), this protein is 5'-nucleotidase SurE.